Reading from the N-terminus, the 308-residue chain is Probable inositol oxygenase (308 aa).

Substrate is bound by residues R49 and 106-108 (DDS). The Fe cation site is built by H119, H144, and D145. Substrate contacts are provided by residues K148 and 165–166 (GD). Positions 217, 243, and 276 each coordinate Fe cation. 243-244 (HS) serves as a coordination point for substrate.

Belongs to the myo-inositol oxygenase family. Fe cation is required as a cofactor.

The protein localises to the cytoplasm. It carries out the reaction myo-inositol + O2 = D-glucuronate + H2O + H(+). The protein operates within polyol metabolism; myo-inositol degradation into D-glucuronate; D-glucuronate from myo-inositol: step 1/1. Functionally, involved in the biosynthesis of UDP-glucuronic acid (UDP-GlcA), providing nucleotide sugars for cell-wall polymers. May be also involved in plant ascorbate biosynthesis. This Oryza sativa subsp. japonica (Rice) protein is Probable inositol oxygenase.